The chain runs to 4599 residues: Low-density lipoprotein receptor-related protein 1B (4599 aa).

The signal sequence occupies residues 1 to 20 (MSEFLLALLTLSGLLPIARV). The Extracellular portion of the chain corresponds to 25 to 4444 (ADRDQQLCDP…KSDHISTRSI (4420 aa)). 2 consecutive LDL-receptor class A domains span residues 31 to 70 (LCDP…DTCP) and 76 to 114 (KCPL…VHCQ). 12 disulfide bridges follow: cysteine 32/cysteine 45, cysteine 39/cysteine 58, cysteine 52/cysteine 69, cysteine 77/cysteine 90, cysteine 84/cysteine 103, cysteine 97/cysteine 113, cysteine 120/cysteine 129, cysteine 125/cysteine 138, cysteine 140/cysteine 153, cysteine 159/cysteine 169, cysteine 165/cysteine 178, and cysteine 180/cysteine 193. Positions 116-154 (LLSNCQQLNCQYKCTMVRNSTRCYCEDGFEITEDGRSCK) constitute an EGF-like 1 domain. Asparagine 134 carries an N-linked (GlcNAc...) asparagine glycan. An EGF-like 2; calcium-binding domain is found at 155-194 (DQDECAVYGTCSQTCRNTHGSYTCSCVEGYLMQPDNRSCK). 4 N-linked (GlcNAc...) asparagine glycosylation sites follow: asparagine 190, asparagine 220, asparagine 313, and asparagine 360. LDL-receptor class B repeat units follow at residues 295-337 (RNLY…DPIA), 338-381 (GKLF…DLVN), and 382-425 (KLVY…FEDY). N-linked (GlcNAc...) asparagine glycosylation occurs at asparagine 443. The region spanning 471-517 (RSHACEVDPYGMPGGCSHICLLSSSYKTRTCRCRTGFNLGSDGRSCK) is the EGF-like 3 domain. 4 LDL-receptor class B repeats span residues 568–610 (NYIY…DWIG), 611–656 (NNLY…DPVN), 657–706 (GWMY…DFHT), and 707–750 (NTLY…HGNY). 2 N-linked (GlcNAc...) asparagine glycosylation sites follow: asparagine 725 and asparagine 758. The region spanning 794-834 (GDNMCRVNNGGCSTLCLAIPGGRVCACADNQLLDENGTTCT) is the EGF-like 4 domain. Intrachain disulfides connect cysteine 798–cysteine 809, cysteine 805–cysteine 818, cysteine 820–cysteine 833, cysteine 845–cysteine 857, cysteine 852–cysteine 870, and cysteine 864–cysteine 881. N-linked (GlcNAc...) asparagine glycosylation occurs at asparagine 829. An LDL-receptor class A 3 domain is found at 844-882 (ICKAGEFRCKNRHCIQARWKCDGDDDCLDGSDEDSVNCF). Residue asparagine 883 is glycosylated (N-linked (GlcNAc...) asparagine). 7 consecutive LDL-receptor class A domains span residues 885 to 923 (SCPD…QTCT), 926 to 963 (TCQV…ASCE), 966 to 1003 (TCEP…VGCV), 1005 to 1043 (SCFD…INCT), 1052 to 1089 (GCNG…KGCN), 1094 to 1132 (LCDH…DDCD), and 1135 to 1174 (LCGP…YLCD). Cystine bridges form between cysteine 886/cysteine 898, cysteine 893/cysteine 911, cysteine 905/cysteine 922, cysteine 927/cysteine 939, cysteine 934/cysteine 952, cysteine 946/cysteine 962, cysteine 967/cysteine 980, cysteine 975/cysteine 993, cysteine 987/cysteine 1002, cysteine 1006/cysteine 1018, cysteine 1013/cysteine 1031, cysteine 1025/cysteine 1042, cysteine 1053/cysteine 1066, cysteine 1060/cysteine 1079, and cysteine 1073/cysteine 1088. An N-linked (GlcNAc...) asparagine glycan is attached at asparagine 919. The N-linked (GlcNAc...) asparagine glycan is linked to asparagine 1041. A glycan (N-linked (GlcNAc...) asparagine) is linked at asparagine 1089. Disulfide bonds link cysteine 1095–cysteine 1109, cysteine 1103–cysteine 1122, cysteine 1116–cysteine 1131, cysteine 1136–cysteine 1150, cysteine 1143–cysteine 1163, and cysteine 1157–cysteine 1173. The N-linked (GlcNAc...) asparagine glycan is linked to asparagine 1145. EGF-like domains follow at residues 1174 to 1213 (DECS…KTCE) and 1214 to 1253 (IVDY…ESCT). N-linked (GlcNAc...) asparagine glycosylation occurs at asparagine 1209. A glycan (N-linked (GlcNAc...) asparagine) is linked at asparagine 1298. 5 LDL-receptor class B repeats span residues 1300–1346 (SLLY…DWIA), 1347–1389 (GNIY…DPRY), 1390–1436 (GILF…DHFE), 1437–1480 (KRIV…LYGS), and 1481–1522 (EVYW…YHPS). Residues asparagine 1502, asparagine 1549, and asparagine 1636 are each glycosylated (N-linked (GlcNAc...) asparagine). The EGF-like 7 domain occupies 1527-1570 (APNPCAANDGKGPCSHMCLINHNRSAACACPHLMKLSSDKKTCY). LDL-receptor class B repeat units follow at residues 1618–1660 (ERLY…DWVS), 1661–1704 (RNLY…HPVR), 1705–1744 (GKLY…DYVE), and 1745–1787 (NKLY…TIMD). N-linked (GlcNAc...) asparagine glycans are attached at residues asparagine 1754 and asparagine 1816. The EGF-like 8 domain maps to 1834–1875 (GSNSCQLNNGGCSQLCLPTSETTRTCMCTVGYYLQKNRMSCQ). 3 cysteine pairs are disulfide-bonded: cysteine 1838–cysteine 1849, cysteine 1845–cysteine 1859, and cysteine 1861–cysteine 1874. N-linked (GlcNAc...) asparagine glycosylation occurs at asparagine 1921. LDL-receptor class B repeat units lie at residues 1922 to 1964 (DTIY…DWIA), 1965 to 2007 (GNIY…HPEK), 2008 to 2051 (GLLF…DYEE), and 2052 to 2095 (NKLY…FGAY). Asparagine 1983 carries an N-linked (GlcNAc...) asparagine glycan. Asparagine 2105 carries an N-linked (GlcNAc...) asparagine glycan. The region spanning 2143–2183 (GTNVCARDNGGCKQLCLYRGNSRRTCACAHGYLAEDGVTCL) is the EGF-like 9 domain. 3 cysteine pairs are disulfide-bonded: cysteine 2147/cysteine 2158, cysteine 2154/cysteine 2168, and cysteine 2170/cysteine 2182. LDL-receptor class B repeat units follow at residues 2239–2280 (NRIF…HRAW), 2281–2329 (DTLY…DECQ), 2330–2374 (NLMF…DYRA), 2375–2416 (EKLY…VYDN), and 2417–2459 (YIFW…VAND). Residues asparagine 2458, asparagine 2488, and asparagine 2507 are each glycosylated (N-linked (GlcNAc...) asparagine). An EGF-like 10 domain is found at 2464–2504 (ELSPCALLNGGCHDLCLLTPNGRVNCSCRGDRILLEDNRCV). Residues 2509–2548 (SCNAYSEFECGNGECIDYQLTCDGIPHCKDKSDEKLLYCE) form the LDL-receptor class A 11 domain. 3 disulfide bridges follow: cysteine 2510-cysteine 2523, cysteine 2518-cysteine 2536, and cysteine 2530-cysteine 2547. N-linked (GlcNAc...) asparagine glycosylation is present at asparagine 2549. 6 consecutive LDL-receptor class A domains span residues 2551-2587 (SCRR…LDCK), 2590-2626 (TCAT…KNCN), 2629-2675 (DCTH…LKCP), 2681-2717 (KCEE…FHCD), 2719-2757 (SCSW…SICG), and 2760-2800 (TCAA…AGCA). 6 cysteine pairs are disulfide-bonded: cysteine 2552–cysteine 2564, cysteine 2559–cysteine 2577, cysteine 2571–cysteine 2586, cysteine 2591–cysteine 2603, cysteine 2598–cysteine 2616, and cysteine 2610–cysteine 2625. 2 N-linked (GlcNAc...) asparagine glycosylation sites follow: asparagine 2626 and asparagine 2647. 12 disulfides stabilise this stretch: cysteine 2630/cysteine 2652, cysteine 2646/cysteine 2665, cysteine 2659/cysteine 2674, cysteine 2682/cysteine 2694, cysteine 2689/cysteine 2707, cysteine 2701/cysteine 2716, cysteine 2720/cysteine 2732, cysteine 2727/cysteine 2745, cysteine 2739/cysteine 2756, cysteine 2761/cysteine 2774, cysteine 2768/cysteine 2787, and cysteine 2781/cysteine 2799. Asparagine 2802 is a glycosylation site (N-linked (GlcNAc...) asparagine). 3 LDL-receptor class A domains span residues 2804 to 2841 (TCDE…PQCG), 2844 to 2885 (QCGT…PKCK), and 2890 to 2926 (SCNS…RNCH). 15 disulfides stabilise this stretch: cysteine 2805–cysteine 2817, cysteine 2812–cysteine 2830, cysteine 2824–cysteine 2840, cysteine 2845–cysteine 2857, cysteine 2852–cysteine 2871, cysteine 2865–cysteine 2884, cysteine 2891–cysteine 2903, cysteine 2898–cysteine 2916, cysteine 2910–cysteine 2925, cysteine 2930–cysteine 2942, cysteine 2938–cysteine 2951, cysteine 2953–cysteine 2966, cysteine 2972–cysteine 2982, cysteine 2978–cysteine 2991, and cysteine 2993–cysteine 3007. Residue asparagine 2892 is glycosylated (N-linked (GlcNAc...) asparagine). One can recognise an EGF-like 11 domain in the interval 2927–2967 (INECLSKKVSGCSQDCQDLPVSYKCKCWPGFQLKDDGKTCV). Positions 2968-3008 (DIDECSSGFPCSQQCINTYGTYKCLCTDGYEIQPDNPNGCK) constitute an EGF-like 12; calcium-binding domain. Asparagine 3034, asparagine 3066, and asparagine 3076 each carry an N-linked (GlcNAc...) asparagine glycan. LDL-receptor class B repeat units lie at residues 3055 to 3098 (EFIY…DWIG), 3099 to 3141 (KNLY…DPQA), 3142 to 3185 (GYLY…DYVN), 3186 to 3224 (RRLY…TLFE), and 3225 to 3268 (DYIY…HSYR). Asparagine 3164 carries an N-linked (GlcNAc...) asparagine glycan. An EGF-like 13 domain is found at 3273–3314 (SKHLCMINNGGCSHLCLLAPGKTHTCACPTNFYLAADNRTCL). Asparagine 3310 and asparagine 3316 each carry an N-linked (GlcNAc...) asparagine glycan. LDL-receptor class A domains lie at 3316–3353 (NCTA…DDCP), 3356–3392 (RCQP…LNCD), 3395–3432 (VCLS…RDCP), 3435–3472 (SCSP…ANCD), 3475–3511 (TCGP…ENCK), 3514–3550 (TCTL…RNCE), 3552–3588 (SCSK…KSCE), 3593–3629 (TCSS…MDCV), 3631–3668 (ECKE…ENCE), 3673–3711 (ICRA…DMCV), 3714–3752 (LCPS…DHCG), and 3761–3797 (PCKK…QGCR). Cystine bridges form between cysteine 3317–cysteine 3329, cysteine 3324–cysteine 3342, cysteine 3336–cysteine 3352, cysteine 3357–cysteine 3369, cysteine 3364–cysteine 3382, cysteine 3376–cysteine 3391, cysteine 3396–cysteine 3409, cysteine 3403–cysteine 3422, cysteine 3416–cysteine 3431, cysteine 3436–cysteine 3449, cysteine 3443–cysteine 3462, cysteine 3456–cysteine 3471, cysteine 3476–cysteine 3488, cysteine 3483–cysteine 3501, cysteine 3495–cysteine 3510, cysteine 3515–cysteine 3527, cysteine 3522–cysteine 3540, cysteine 3534–cysteine 3549, cysteine 3553–cysteine 3565, cysteine 3560–cysteine 3578, cysteine 3572–cysteine 3587, cysteine 3594–cysteine 3606, cysteine 3601–cysteine 3619, cysteine 3613–cysteine 3628, cysteine 3632–cysteine 3645, cysteine 3639–cysteine 3658, cysteine 3652–cysteine 3667, cysteine 3674–cysteine 3686, cysteine 3681–cysteine 3699, cysteine 3693–cysteine 3710, cysteine 3715–cysteine 3729, cysteine 3723–cysteine 3742, cysteine 3736–cysteine 3751, cysteine 3762–cysteine 3774, cysteine 3769–cysteine 3787, cysteine 3781–cysteine 3796, cysteine 3805–cysteine 3818, cysteine 3812–cysteine 3827, cysteine 3829–cysteine 3842, cysteine 3848–cysteine 3858, cysteine 3854–cysteine 3867, and cysteine 3869–cysteine 3880. Asparagine 3682 carries an N-linked (GlcNAc...) asparagine glycan. EGF-like domains lie at 3801–3843 (TEYT…RQCE) and 3844–3881 (DLNE…NTCI). 3 N-linked (GlcNAc...) asparagine glycosylation sites follow: asparagine 3877, asparagine 3894, and asparagine 3906. LDL-receptor class B repeat units follow at residues 3933–3980 (DMII…DWVA), 3981–4038 (GNIY…NPKR), 4039–4082 (GMMY…DYFS), and 4083–4127 (ERIY…FEDY). Asparagine 4017 is a glycosylation site (N-linked (GlcNAc...) asparagine). EGF-like domains are found at residues 4171-4208 (DLPN…GTCN), 4213-4249 (LDDS…ERCE), 4249-4285 (EVNH…PNCG), 4285-4321 (GKTV…DRCQ), 4321-4357 (QYYV…PKCE), 4357-4392 (EVDK…SSCQ), and 4390-4427 (SCQL…TQCE). Asparagine 4204 is a glycosylation site (N-linked (GlcNAc...) asparagine). 11 disulfide bridges follow: cysteine 4217–cysteine 4227, cysteine 4221–cysteine 4237, cysteine 4253–cysteine 4263, cysteine 4257–cysteine 4273, cysteine 4275–cysteine 4284, cysteine 4289–cysteine 4299, cysteine 4293–cysteine 4309, cysteine 4311–cysteine 4320, cysteine 4325–cysteine 4335, cysteine 4329–cysteine 4345, and cysteine 4347–cysteine 4356. N-linked (GlcNAc...) asparagine glycosylation is present at asparagine 4381. 3 disulfides stabilise this stretch: cysteine 4394–cysteine 4404, cysteine 4398–cysteine 4415, and cysteine 4417–cysteine 4426. N-linked (GlcNAc...) asparagine glycosylation is present at asparagine 4420. The helical transmembrane segment at 4445–4467 (AIIVPLVLLVTLITTLVIGLVLC) threads the bilayer. The Cytoplasmic portion of the chain corresponds to 4468-4599 (KRKRRTKTIR…IEIGIRETVA (132 aa)). Short sequence motifs (endocytosis signal) lie at residues 4492–4495 (NPSY) and 4559–4562 (NPVY).

This sequence belongs to the LDLR family. As to quaternary structure, binds LRPAP1, PLAU, PLAT and SERPINE1; binding is followed by internalization and degradation of the ligands. Expressed in thyroid gland and in salivary gland, as well as in adult and fetal brain.

Its subcellular location is the membrane. In terms of biological role, potential cell surface proteins that bind and internalize ligands in the process of receptor-mediated endocytosis. In Homo sapiens (Human), this protein is Low-density lipoprotein receptor-related protein 1B (LRP1B).